A 338-amino-acid chain; its full sequence is Anthranilate phosphoribosyltransferase (338 aa).

5-phospho-alpha-D-ribose 1-diphosphate contacts are provided by residues Gly81, 84–85 (GD), Thr89, 91–94 (NIST), 109–117 (KHGNRNLSS), and Ala121. Residue Gly81 participates in anthranilate binding. A Mg(2+)-binding site is contributed by Ser93. Residue Asn112 coordinates anthranilate. Position 167 (Arg167) interacts with anthranilate. Positions 226 and 227 each coordinate Mg(2+).

Belongs to the anthranilate phosphoribosyltransferase family. In terms of assembly, homodimer. The cofactor is Mg(2+).

The catalysed reaction is N-(5-phospho-beta-D-ribosyl)anthranilate + diphosphate = 5-phospho-alpha-D-ribose 1-diphosphate + anthranilate. Its pathway is amino-acid biosynthesis; L-tryptophan biosynthesis; L-tryptophan from chorismate: step 2/5. In terms of biological role, catalyzes the transfer of the phosphoribosyl group of 5-phosphorylribose-1-pyrophosphate (PRPP) to anthranilate to yield N-(5'-phosphoribosyl)-anthranilate (PRA). This is Anthranilate phosphoribosyltransferase from Cereibacter sphaeroides (strain KD131 / KCTC 12085) (Rhodobacter sphaeroides).